We begin with the raw amino-acid sequence, 585 residues long: Staphyloferrin A synthase (585 aa).

The protein belongs to the IucA/IucC family.

It catalyses the reaction N(5)-[(S)-citryl]-D-ornithine + citrate + ATP = staphyloferrin A + AMP + diphosphate + H(+). The protein operates within siderophore biosynthesis. Involved in the biosynthesis of the siderophore staphyloferrin A. Catalyzes the ATP-dependent condensation of a citryl-D-ornithine intermediate, produced by SfnaD, and citrate to form staphyloferrin A. In Staphylococcus aureus (strain NCTC 8325 / PS 47), this protein is Staphyloferrin A synthase.